A 396-amino-acid polypeptide reads, in one-letter code: Putative F-box protein At4g22660 (396 aa).

Residues 7–58 enclose the F-box domain; that stretch reads PNTWSDLPLDLLNLVFKRLSFANFRQAKSVCSSWYSASKQSVPKNQIPWLML.

This chain is Putative F-box protein At4g22660, found in Arabidopsis thaliana (Mouse-ear cress).